Reading from the N-terminus, the 125-residue chain is Holo-[acyl-carrier-protein] synthase (125 aa).

The Mg(2+) site is built by aspartate 8 and glutamate 57.

The protein belongs to the P-Pant transferase superfamily. AcpS family. Mg(2+) serves as cofactor.

Its subcellular location is the cytoplasm. The catalysed reaction is apo-[ACP] + CoA = holo-[ACP] + adenosine 3',5'-bisphosphate + H(+). Functionally, transfers the 4'-phosphopantetheine moiety from coenzyme A to a Ser of acyl-carrier-protein. This Blochmanniella floridana protein is Holo-[acyl-carrier-protein] synthase.